A 298-amino-acid chain; its full sequence is 5,10-methylenetetrahydrofolate reductase (298 aa).

The Proton donor/acceptor role is filled by E28. T59 serves as a coordination point for NADH. Y60, A62, H88, R118, G119, D120, A132, Y152, H156, A159, D165, N168, and K172 together coordinate FAD. D120 provides a ligand contact to (6S)-5-methyl-5,6,7,8-tetrahydrofolate. Q183 serves as a coordination point for NADH. Residues Q183, Q219, and R279 each contribute to the (6S)-5-methyl-5,6,7,8-tetrahydrofolate site.

The protein belongs to the methylenetetrahydrofolate reductase family. Requires FAD as cofactor.

It catalyses the reaction (6S)-5-methyl-5,6,7,8-tetrahydrofolate + NAD(+) = (6R)-5,10-methylene-5,6,7,8-tetrahydrofolate + NADH + H(+). Its pathway is one-carbon metabolism; tetrahydrofolate interconversion. It functions in the pathway amino-acid biosynthesis; L-methionine biosynthesis via de novo pathway. In terms of biological role, catalyzes the NADH-dependent reduction of 5,10-methylenetetrahydrofolate to 5-methyltetrahydrofolate. Is required to provide the methyl group necessary for methionine synthetase to convert homocysteine to methionine; the methyl group is given by 5-methyltetrahydrofolate. The protein is 5,10-methylenetetrahydrofolate reductase (metF) of Pectobacterium carotovorum subsp. carotovorum (Erwinia carotovora subsp. carotovora).